Reading from the N-terminus, the 331-residue chain is MKNIYPNELKKSLMQKLHYFYIFLGEDFFLLEKNQDMILNFAYKKGFLEKIIIDVEKNQDWKKIILFYKTNNLFFKKTTLVINFLIKKLNVILIQNLNKMFSLLHPDILIILKFNHLSRFIQKNKSLKEFKNYNIVSCFTPYNLNFINWIKYEIQEKKINIEEKAFFLLCKYYEGNTLFIYKILDMLFIIWPDTCITEKKIKKIIIEFFDVSPSYWINSIFQGKTEKSFYILNIFFKKKYNPLILVRSLQKDLLQLIHMKREKKISIYVMLEKYNIFVTRRKFFIKAFNKINNDSLLKAIQILVKIEVNIKKKYNNYVWNQLQELILILCN.

This sequence belongs to the DNA polymerase HolA subunit family. As to quaternary structure, DNA polymerase III contains a core (composed of alpha, epsilon and theta chains) that associates with a tau subunit. This core dimerizes to form the POLIII' complex. PolIII' associates with the gamma complex (composed of gamma, delta, delta', psi and chi chains) and with the beta chain to form the complete DNA polymerase III complex.

The catalysed reaction is DNA(n) + a 2'-deoxyribonucleoside 5'-triphosphate = DNA(n+1) + diphosphate. DNA polymerase III is a complex, multichain enzyme responsible for most of the replicative synthesis in bacteria. This DNA polymerase also exhibits 3' to 5' exonuclease activity. The delta subunit seems to interact with the gamma subunit to transfer the beta subunit on the DNA. In Buchnera aphidicola subsp. Acyrthosiphon pisum (strain APS) (Acyrthosiphon pisum symbiotic bacterium), this protein is DNA polymerase III subunit delta (holA).